The chain runs to 678 residues: Glutamate--cysteine ligase (678 aa).

It belongs to the glutamate--cysteine ligase type 3 family.

It catalyses the reaction L-cysteine + L-glutamate + ATP = gamma-L-glutamyl-L-cysteine + ADP + phosphate + H(+). Its pathway is sulfur metabolism; glutathione biosynthesis; glutathione from L-cysteine and L-glutamate: step 1/2. With respect to regulation, feedback inhibition by glutathione. In terms of biological role, catalyzes the ATP-dependent condensation of cysteine and glutamate to form the dipeptide gamma-glutamylcysteine (gamma-GC), the first and rate-limiting step in the production of glutathione (GSH). This is Glutamate--cysteine ligase (GSH1) from Saccharomyces cerevisiae (strain ATCC 204508 / S288c) (Baker's yeast).